The chain runs to 101 residues: NAD(P)H-quinone oxidoreductase subunit 4L, chloroplastic (101 aa).

3 helical membrane-spanning segments follow: residues 2-22 (MLEH…YGLI), 32-52 (MCLE…SDFF), and 61-81 (IFSI…LAIV).

The protein belongs to the complex I subunit 4L family. As to quaternary structure, NDH is composed of at least 16 different subunits, 5 of which are encoded in the nucleus.

Its subcellular location is the plastid. The protein resides in the chloroplast thylakoid membrane. It catalyses the reaction a plastoquinone + NADH + (n+1) H(+)(in) = a plastoquinol + NAD(+) + n H(+)(out). The catalysed reaction is a plastoquinone + NADPH + (n+1) H(+)(in) = a plastoquinol + NADP(+) + n H(+)(out). In terms of biological role, NDH shuttles electrons from NAD(P)H:plastoquinone, via FMN and iron-sulfur (Fe-S) centers, to quinones in the photosynthetic chain and possibly in a chloroplast respiratory chain. The immediate electron acceptor for the enzyme in this species is believed to be plastoquinone. Couples the redox reaction to proton translocation, and thus conserves the redox energy in a proton gradient. This chain is NAD(P)H-quinone oxidoreductase subunit 4L, chloroplastic, found in Cicer arietinum (Chickpea).